A 282-amino-acid chain; its full sequence is 4-hydroxy-3-methylbut-2-enyl diphosphate reductase (282 aa).

Cysteine 14 serves as a coordination point for [4Fe-4S] cluster. (2E)-4-hydroxy-3-methylbut-2-enyl diphosphate contacts are provided by histidine 43 and histidine 78. Dimethylallyl diphosphate-binding residues include histidine 43 and histidine 78. 2 residues coordinate isopentenyl diphosphate: histidine 43 and histidine 78. Residue cysteine 100 participates in [4Fe-4S] cluster binding. Histidine 128 is a (2E)-4-hydroxy-3-methylbut-2-enyl diphosphate binding site. Histidine 128 is a dimethylallyl diphosphate binding site. Histidine 128 provides a ligand contact to isopentenyl diphosphate. The active-site Proton donor is the glutamate 130. A (2E)-4-hydroxy-3-methylbut-2-enyl diphosphate-binding site is contributed by threonine 164. Cysteine 192 is a binding site for [4Fe-4S] cluster. (2E)-4-hydroxy-3-methylbut-2-enyl diphosphate-binding residues include serine 220, serine 221, asparagine 222, and serine 266. Serine 220, serine 221, asparagine 222, and serine 266 together coordinate dimethylallyl diphosphate. Isopentenyl diphosphate contacts are provided by serine 220, serine 221, asparagine 222, and serine 266.

It belongs to the IspH family. [4Fe-4S] cluster is required as a cofactor.

The catalysed reaction is isopentenyl diphosphate + 2 oxidized [2Fe-2S]-[ferredoxin] + H2O = (2E)-4-hydroxy-3-methylbut-2-enyl diphosphate + 2 reduced [2Fe-2S]-[ferredoxin] + 2 H(+). It carries out the reaction dimethylallyl diphosphate + 2 oxidized [2Fe-2S]-[ferredoxin] + H2O = (2E)-4-hydroxy-3-methylbut-2-enyl diphosphate + 2 reduced [2Fe-2S]-[ferredoxin] + 2 H(+). Its pathway is isoprenoid biosynthesis; dimethylallyl diphosphate biosynthesis; dimethylallyl diphosphate from (2E)-4-hydroxy-3-methylbutenyl diphosphate: step 1/1. It participates in isoprenoid biosynthesis; isopentenyl diphosphate biosynthesis via DXP pathway; isopentenyl diphosphate from 1-deoxy-D-xylulose 5-phosphate: step 6/6. Functionally, catalyzes the conversion of 1-hydroxy-2-methyl-2-(E)-butenyl 4-diphosphate (HMBPP) into a mixture of isopentenyl diphosphate (IPP) and dimethylallyl diphosphate (DMAPP). Acts in the terminal step of the DOXP/MEP pathway for isoprenoid precursor biosynthesis. In Clostridium perfringens (strain 13 / Type A), this protein is 4-hydroxy-3-methylbut-2-enyl diphosphate reductase.